We begin with the raw amino-acid sequence, 836 residues long: Eukaryotic translation initiation factor 3 subunit C (836 aa).

The interval 1–97 (MSRFFVSGYD…RRVVKSAKEK (97 aa)) is disordered. Positions 13 to 55 (SSSEEEDLLTSSEEELMSSEQESDSEFDDEFANDDDSDSSDSD) are enriched in acidic residues. A compositionally biased stretch (basic and acidic residues) spans 86 to 97 (EGRRVVKSAKEK). In terms of domain architecture, PCI spans 586–761 (FHMHINLELL…KSINFVSSEH (176 aa)). The interval 783 to 817 (DKNEKTASNGHGRKTTQQQQQQQQKEQREQTHDEN) is disordered. A compositionally biased stretch (low complexity) spans 797 to 806 (TTQQQQQQQQ). Residues 807–817 (KEQREQTHDEN) are compositionally biased toward basic and acidic residues.

Belongs to the eIF-3 subunit C family. As to quaternary structure, component of the eukaryotic translation initiation factor 3 (eIF-3) complex.

The protein resides in the cytoplasm. Component of the eukaryotic translation initiation factor 3 (eIF-3) complex, which is involved in protein synthesis of a specialized repertoire of mRNAs and, together with other initiation factors, stimulates binding of mRNA and methionyl-tRNAi to the 40S ribosome. The eIF-3 complex specifically targets and initiates translation of a subset of mRNAs involved in cell proliferation. This is Eukaryotic translation initiation factor 3 subunit C from Meyerozyma guilliermondii (strain ATCC 6260 / CBS 566 / DSM 6381 / JCM 1539 / NBRC 10279 / NRRL Y-324) (Yeast).